Here is a 123-residue protein sequence, read N- to C-terminus: Large ribosomal subunit protein bL12 (123 aa).

This sequence belongs to the bacterial ribosomal protein bL12 family. As to quaternary structure, homodimer. Part of the ribosomal stalk of the 50S ribosomal subunit. Forms a multimeric L10(L12)X complex, where L10 forms an elongated spine to which 2 to 4 L12 dimers bind in a sequential fashion. Binds GTP-bound translation factors.

Functionally, forms part of the ribosomal stalk which helps the ribosome interact with GTP-bound translation factors. Is thus essential for accurate translation. This Hydrogenovibrio crunogenus (strain DSM 25203 / XCL-2) (Thiomicrospira crunogena) protein is Large ribosomal subunit protein bL12.